Reading from the N-terminus, the 101-residue chain is Large ribosomal subunit protein eL43 (101 aa).

Residues 40–62 (CPSCRSLVRLQRIAFGIWKCPKC) form a C4-type zinc finger.

This sequence belongs to the eukaryotic ribosomal protein eL43 family. It depends on Zn(2+) as a cofactor.

The chain is Large ribosomal subunit protein eL43 from Pyrobaculum neutrophilum (strain DSM 2338 / JCM 9278 / NBRC 100436 / V24Sta) (Thermoproteus neutrophilus).